Reading from the N-terminus, the 472-residue chain is UDP-glycosyltransferase 100 (472 aa).

His15 (proton acceptor) is an active-site residue. An an anthocyanidin-binding site is contributed by His15. Asp117 functions as the Charge relay in the catalytic mechanism. Residues Ala344, Gln346, His361, Trp364, Asn365, Ser366, and Glu369 each coordinate UDP-alpha-D-glucose. Residue Gly384 coordinates an anthocyanidin. Residues Glu385 and Gln386 each coordinate UDP-alpha-D-glucose.

Belongs to the UDP-glycosyltransferase family.

The enzyme catalyses (20S)-protopanaxadiol + UDP-alpha-D-glucose = (20S)-ginsenoside C-K + UDP + H(+). It catalyses the reaction (20S)-protopanaxatriol + UDP-alpha-D-glucose = (20S)-ginsenoside Rh1 + UDP + H(+). The catalysed reaction is (20S)-ginsenoside F1 + UDP-alpha-D-glucose = (20S)-ginsenoside Rg1 + UDP + H(+). The protein operates within secondary metabolite biosynthesis; terpenoid biosynthesis. Its function is as follows. Component of the dammarane-type triterpene saponins (e.g. PPT-type ginsenosides or panaxosides) biosynthetic pathway. Glycosyltransferase that catalyzes the biosynthesis of ginsenoside Rh1 from protopanaxatriol (PPT) and the conversion of ginsenoside F1 to ginsenoside Rg1. The polypeptide is UDP-glycosyltransferase 100 (Panax ginseng (Korean ginseng)).